A 730-amino-acid polypeptide reads, in one-letter code: Patatin-like phospholipase domain-containing protein CIMG_04897 (730 aa).

Basic residues predominate over residues 1–11 (MTANSSRRRLQ). The segment at 1–26 (MTANSSRRRLQMKSPRTDGDEKEEDY) is disordered. The chain crosses the membrane as a helical span at residues 97-117 (WPFLLFVLSWIVFLGALYILT). The PNPLA domain maps to 281 to 472 (LCLSGGATLA…RTDIPLKALD (192 aa)). The short motif at 312 to 316 (GTSGG) is the GXSXG element. The active-site Nucleophile is Ser-314. The active-site Proton acceptor is Asp-459. Residues 667–730 (GHFREAPTSH…QGQSSGTKIG (64 aa)) are disordered. Positions 721-730 (QGQSSGTKIG) are enriched in polar residues.

The protein belongs to the PLPL family.

Its subcellular location is the membrane. In terms of biological role, probable lipid hydrolase. The protein is Patatin-like phospholipase domain-containing protein CIMG_04897 of Coccidioides immitis (strain RS) (Valley fever fungus).